A 149-amino-acid chain; its full sequence is Large ribosomal subunit protein bL9 (149 aa).

Lys-89 carries the post-translational modification N6-acetyllysine.

This sequence belongs to the bacterial ribosomal protein bL9 family.

Functionally, binds to the 23S rRNA. The polypeptide is Large ribosomal subunit protein bL9 (Shigella boydii serotype 18 (strain CDC 3083-94 / BS512)).